Reading from the N-terminus, the 392-residue chain is UPF0229 protein CPF_1540 (392 aa).

Residues 75-100 (VTTGTGEERRGDRISSDKRKAISNNK) are disordered. Basic and acidic residues predominate over residues 80-94 (GEERRGDRISSDKRK).

Belongs to the UPF0229 family.

The protein is UPF0229 protein CPF_1540 of Clostridium perfringens (strain ATCC 13124 / DSM 756 / JCM 1290 / NCIMB 6125 / NCTC 8237 / Type A).